A 558-amino-acid polypeptide reads, in one-letter code: Cytochrome P450 monooxygenase grgG (558 aa).

Residues 11-31 traverse the membrane as a helical segment; it reads PASFIYFPLLILVGHALIFIL. Heme is bound at residue cysteine 470.

The protein belongs to the cytochrome P450 family. Heme is required as a cofactor.

Its subcellular location is the membrane. It participates in secondary metabolite biosynthesis. Functionally, cytochrome P450 monooxygenase; part of the gene cluster that mediates the biosynthesis of gregatin A, a fungal polyketide featuring an alkylated furanone core. The PKS grgA synthesizes C11 and C4 polyketide chains in the presence and absence of the trans-enoyl reductase grgB, respectively. The polyketide transferase grgF is then responsible for the fusion of the two carbon chains to produce the furanone skeleton of gregatin A. Next, the cytochrome P450 monooxygenase grgG performs the oxidative cyclization to furnish the gregatin scaffold and leads to the formation of desmethylgregatin A. In this transformation, grgG initially abstracts a hydrogen atom from C-8 to generate a substrate radical, from which one electron is transferred to the iron-heme center to yield a carbocationic species. Heterocyclization along with double-bond isomerizations provides desmethylgregatin A with the furanone ring. Alternatively, grgG might provide hydroxylation at the C-8 radical, which is followed by dehydration to give the cyclized desmethylgregatin A. Finally, the O-methyltransferase grgD methylates the carboxyl group of desmethylgregatin A to provide gregatin A. This is Cytochrome P450 monooxygenase grgG (grgG) from Penicillium sp.